The primary structure comprises 516 residues: L-amino acid oxidase (516 aa).

A signal peptide spans 1–18 (MNVFFMFSLLFLAALESC). FAD is bound by residues 61-62 (MS), 81-82 (EA), Arg89, and 105-108 (GPMR). Arg108 is a binding site for substrate. Asn190 carries an N-linked (GlcNAc...) asparagine glycan. Val279 contributes to the FAD binding site. Residues Asn299 and Asn404 are each glycosylated (N-linked (GlcNAc...) asparagine). Cys349 and Cys430 form a disulfide bridge. FAD contacts are provided by residues Glu475 and 482-487 (GWIDST). A substrate-binding site is contributed by 482 to 483 (GW).

Belongs to the flavin monoamine oxidase family. FIG1 subfamily. In terms of assembly, homodimer; non-covalently linked. FAD is required as a cofactor. Post-translationally, N-glycosylated (14%). The enzymatic activity remains unchanged after deglycosylation. As to expression, expressed by the venom gland.

The protein localises to the secreted. The enzyme catalyses an L-alpha-amino acid + O2 + H2O = a 2-oxocarboxylate + H2O2 + NH4(+). It carries out the reaction L-leucine + O2 + H2O = 4-methyl-2-oxopentanoate + H2O2 + NH4(+). It catalyses the reaction L-phenylalanine + O2 + H2O = 3-phenylpyruvate + H2O2 + NH4(+). The catalysed reaction is L-tryptophan + O2 + H2O = indole-3-pyruvate + H2O2 + NH4(+). The enzyme catalyses L-methionine + O2 + H2O = 4-methylsulfanyl-2-oxobutanoate + H2O2 + NH4(+). It carries out the reaction L-isoleucine + O2 + H2O = (S)-3-methyl-2-oxopentanoate + H2O2 + NH4(+). With respect to regulation, inhibited by the substrate analog N-acetyl tryptophan. Catalyzes an oxidative deamination of predominantly hydrophobic and aromatic L-amino acids, thus producing hydrogen peroxide that may contribute to the diverse toxic effects of this enzyme. Is highly active on L-Met&gt;L-Leu&gt;L-Phe&gt;L-Trp=L-Ile. Binds to the cell surface and enables the production of highly localized concentration of hydrogen peroxide in or near the binding interfaces. Does not bind to phospholipids. Induces platelet-rich plasma aggregation, shows cytotoxic effects on some cancer cell lines (B16-F10 (mouse melanoma), PC12 (rat pheochromocytoma), MCF-7 and MDA-MB-231 (human breast carcinoma)) and shows antibacterial activities against both Gram-positive and Gram-negative bacteria. Also exhibits hemorrhage and edema. Does not show cytotoxicity on erythrocytes and peripheral blood mononuclear cells. Its effect on platelets is controversial, since it either induces aggregation or inhibits agonist-induced aggregation. These different effects are probably due to different experimental conditions. This Cerastes cerastes (Horned desert viper) protein is L-amino acid oxidase.